The chain runs to 285 residues: 1,4-dihydroxy-2-naphthoyl-CoA synthase (285 aa).

Substrate-binding positions include R45, S84–Q88, Y97, Y129–G133, T155, S161, Y258, and K273. Residue Q154 to G156 participates in hydrogencarbonate binding.

Belongs to the enoyl-CoA hydratase/isomerase family. MenB subfamily. Hydrogencarbonate is required as a cofactor.

It catalyses the reaction 2-succinylbenzoyl-CoA + H(+) = 1,4-dihydroxy-2-naphthoyl-CoA + H2O. The protein operates within quinol/quinone metabolism; 1,4-dihydroxy-2-naphthoate biosynthesis; 1,4-dihydroxy-2-naphthoate from chorismate: step 6/7. It functions in the pathway quinol/quinone metabolism; menaquinone biosynthesis. Its function is as follows. Converts o-succinylbenzoyl-CoA (OSB-CoA) to 1,4-dihydroxy-2-naphthoyl-CoA (DHNA-CoA). The protein is 1,4-dihydroxy-2-naphthoyl-CoA synthase of Haemophilus influenzae (strain ATCC 51907 / DSM 11121 / KW20 / Rd).